Reading from the N-terminus, the 128-residue chain is Histone H2A type 1-H (128 aa).

The interval 1-22 (MSGRGKQGGKARAKAKTRSSRA) is disordered. Residue serine 2 is modified to N-acetylserine. Residue serine 2 is modified to Phosphoserine; by RPS6KA5. Arginine 4 carries the post-translational modification Citrulline; alternate. Arginine 4 is subject to Symmetric dimethylarginine; by PRMT5; alternate. Lysine 6 carries the post-translational modification N6-(2-hydroxyisobutyryl)lysine. Basic residues predominate over residues 7–19 (QGGKARAKAKTRS). Position 10 is an N6-(2-hydroxyisobutyryl)lysine; alternate (lysine 10). Residues lysine 10 and lysine 14 each carry the N6-(beta-hydroxybutyryl)lysine; alternate modification. An N6-lactoyllysine; alternate modification is found at lysine 10. The residue at position 10 (lysine 10) is an N6-succinyllysine; alternate. Lysine 14 participates in a covalent cross-link: Glycyl lysine isopeptide (Lys-Gly) (interchain with G-Cter in ubiquitin); alternate. Lysine 16 participates in a covalent cross-link: Glycyl lysine isopeptide (Lys-Gly) (interchain with G-Cter in ubiquitin). Lysine 37 bears the N6-(2-hydroxyisobutyryl)lysine; alternate mark. An N6-(beta-hydroxybutyryl)lysine; alternate modification is found at lysine 37. N6-crotonyllysine; alternate is present on lysine 37. An N6-(2-hydroxyisobutyryl)lysine mark is found at lysine 75 and lysine 76. Lysine 96 carries the post-translational modification N6-(2-hydroxyisobutyryl)lysine; alternate. An N6-(beta-hydroxybutyryl)lysine; alternate modification is found at lysine 96. Lysine 96 bears the N6-succinyllysine; alternate mark. At lysine 96 the chain carries N6-glutaryllysine; alternate. An N6-glutaryllysine modification is found at lysine 100. Glutamine 105 carries the post-translational modification N5-methylglutamine. At lysine 119 the chain carries N6-(2-hydroxyisobutyryl)lysine; alternate. Lysine 119 carries the N6-(beta-hydroxybutyryl)lysine; alternate modification. N6-crotonyllysine; alternate is present on residues lysine 119 and lysine 120. Lysine 119 and lysine 120 each carry N6-glutaryllysine; alternate. Lysine 120 participates in a covalent cross-link: Glycyl lysine isopeptide (Lys-Gly) (interchain with G-Cter in ubiquitin); alternate. Residue threonine 121 is modified to Phosphothreonine; by DCAF1. At lysine 126 the chain carries N6-crotonyllysine; alternate. Lysine 126 bears the N6-glutaryllysine; alternate mark.

The protein belongs to the histone H2A family. As to quaternary structure, the nucleosome is a histone octamer containing two molecules each of H2A, H2B, H3 and H4 assembled in one H3-H4 heterotetramer and two H2A-H2B heterodimers. The octamer wraps approximately 147 bp of DNA. Post-translationally, deiminated on Arg-4 in granulocytes upon calcium entry. In terms of processing, monoubiquitination of Lys-120 (H2AK119Ub) by RING1, TRIM37 and RNF2/RING2 complex gives a specific tag for epigenetic transcriptional repression and participates in X chromosome inactivation of female mammals. It is involved in the initiation of both imprinted and random X inactivation. Ubiquitinated H2A is enriched in inactive X chromosome chromatin. Ubiquitination of H2A functions downstream of methylation of 'Lys-27' of histone H3 (H3K27me). H2AK119Ub by RNF2/RING2 can also be induced by ultraviolet and may be involved in DNA repair. Monoubiquitination of Lys-120 (H2AK119Ub) by TRIM37 may promote transformation of cells in a number of breast cancers. Following DNA double-strand breaks (DSBs), it is ubiquitinated through 'Lys-63' linkage of ubiquitin moieties by the E2 ligase UBE2N and the E3 ligases RNF8 and RNF168, leading to the recruitment of repair proteins to sites of DNA damage. Ubiquitination at Lys-14 and Lys-16 (H2AK13Ub and H2AK15Ub, respectively) in response to DNA damage is initiated by RNF168 that mediates monoubiquitination at these 2 sites, and 'Lys-63'-linked ubiquitin are then conjugated to monoubiquitin; RNF8 is able to extend 'Lys-63'-linked ubiquitin chains in vitro. Deubiquitinated by USP51 at Lys-14 and Lys-16 (H2AK13Ub and H2AK15Ub, respectively) after damaged DNA is repaired. H2AK119Ub and ionizing radiation-induced 'Lys-63'-linked ubiquitination (H2AK13Ub and H2AK15Ub) are distinct events. Phosphorylation on Ser-2 (H2AS1ph) is enhanced during mitosis. Phosphorylation on Ser-2 by RPS6KA5/MSK1 directly represses transcription. Acetylation of H3 inhibits Ser-2 phosphorylation by RPS6KA5/MSK1. Phosphorylation at Thr-121 (H2AT120ph) by DCAF1 is present in the regulatory region of many tumor suppresor genes and down-regulates their transcription. Post-translationally, glutamine methylation at Gln-105 (H2AQ104me) by FBL is specifically dedicated to polymerase I. It is present at 35S ribosomal DNA locus and impairs binding of the FACT complex. In terms of processing, symmetric dimethylation on Arg-4 by the PRDM1/PRMT5 complex may play a crucial role in the germ-cell lineage. Crotonylation (Kcr) is specifically present in male germ cells and marks testis-specific genes in post-meiotic cells, including X-linked genes that escape sex chromosome inactivation in haploid cells. Crotonylation marks active promoters and enhancers and confers resistance to transcriptional repressors. It is also associated with post-meiotically activated genes on autosomes. Post-translationally, lactylated in macrophages by EP300/P300 by using lactoyl-CoA directly derived from endogenous or exogenous lactate, leading to stimulates gene transcription.

The protein localises to the nucleus. The protein resides in the chromosome. Its function is as follows. Core component of nucleosome. Nucleosomes wrap and compact DNA into chromatin, limiting DNA accessibility to the cellular machineries which require DNA as a template. Histones thereby play a central role in transcription regulation, DNA repair, DNA replication and chromosomal stability. DNA accessibility is regulated via a complex set of post-translational modifications of histones, also called histone code, and nucleosome remodeling. In Homo sapiens (Human), this protein is Histone H2A type 1-H.